Reading from the N-terminus, the 72-residue chain is MALRFTLTLLLVTILVAAILLGSSEAAYRKPPFNGSIFGKRNSLDYDSAKMSAVCEVAMEACPMWFPQNDSK.

An N-terminal signal peptide occupies residues 1-26 (MALRFTLTLLLVTILVAAILLGSSEA). Asparagine 34 is a glycosylation site (N-linked (GlcNAc...) asparagine). Phenylalanine 38 is subject to Phenylalanine amide. A propeptide spanning residues 42-72 (NSLDYDSAKMSAVCEVAMEACPMWFPQNDSK) is cleaved from the precursor.

It belongs to the FARP (FMRFamide related peptide) family. Strongly expressed in two pairs of neurons in the pars intercerebralis (at protein level).

It localises to the secreted. In terms of biological role, ligand for the neuropeptide SIFamide receptor. Modulates sexual behavior by negatively regulating female receptivity to male courtship and by playing a role in male sex discrimination. Also involved in promoting sleep. The protein is Neuropeptide SIFamide of Drosophila melanogaster (Fruit fly).